We begin with the raw amino-acid sequence, 258 residues long: Acetylglutamate kinase (258 aa).

Residues 44-45 (GG), R66, and N158 contribute to the substrate site. ATP is bound by residues 181-186 (DVSGIL) and 209-211 (IIT).

It belongs to the acetylglutamate kinase family. ArgB subfamily. In terms of assembly, homodimer.

It localises to the cytoplasm. The enzyme catalyses N-acetyl-L-glutamate + ATP = N-acetyl-L-glutamyl 5-phosphate + ADP. Its pathway is amino-acid biosynthesis; L-arginine biosynthesis; N(2)-acetyl-L-ornithine from L-glutamate: step 2/4. Catalyzes the ATP-dependent phosphorylation of N-acetyl-L-glutamate. This chain is Acetylglutamate kinase, found in Salmonella paratyphi A (strain ATCC 9150 / SARB42).